The following is a 557-amino-acid chain: NADP-dependent malic enzyme (557 aa).

The Proton donor role is filled by Tyr91. An NADP(+)-binding site is contributed by Arg144. Residues Arg144 and Lys162 each coordinate substrate. The Proton acceptor role is filled by Lys162. Mn(2+) is bound by residues Glu234 and Asp235. Asn238 lines the NADP(+) pocket. Asp258 contributes to the Mn(2+) binding site. Residues 291–294, Ser325, Asn397, and Asn443 each bind NADP(+); that span reads AGEA. Asn443 is a substrate binding site.

The protein belongs to the malic enzymes family. Homotetramer. Mg(2+) is required as a cofactor. The cofactor is Mn(2+). Post-translationally, the N-terminus is blocked.

The protein localises to the cytoplasm. The catalysed reaction is (S)-malate + NADP(+) = pyruvate + CO2 + NADPH. It carries out the reaction oxaloacetate + H(+) = pyruvate + CO2. This chain is NADP-dependent malic enzyme (ME1), found in Columba livia (Rock dove).